We begin with the raw amino-acid sequence, 224 residues long: Flagellar L-ring protein (224 aa).

An N-terminal signal peptide occupies residues 1-15 (MARYLVLAVALLLAA). C16 is lipidated: N-palmitoyl cysteine. Residue C16 is the site of S-diacylglycerol cysteine attachment.

It belongs to the FlgH family. As to quaternary structure, the basal body constitutes a major portion of the flagellar organelle and consists of four rings (L,P,S, and M) mounted on a central rod.

The protein resides in the cell outer membrane. It is found in the bacterial flagellum basal body. In terms of biological role, assembles around the rod to form the L-ring and probably protects the motor/basal body from shearing forces during rotation. In Shewanella baltica (strain OS223), this protein is Flagellar L-ring protein.